Reading from the N-terminus, the 575-residue chain is GBF-interacting protein 1-like (575 aa).

Disordered stretches follow at residues 66–171 (SKRE…SKSD) and 229–296 (SSSN…VVHS). Polar residues-rich tracts occupy residues 90-102 (FASS…SGRN), 115-138 (TRGS…NETK), and 161-171 (ISASRCSSKSD). Over residues 268–281 (AREETSTVSEDKDY) the composition is skewed to basic and acidic residues.

This sequence belongs to the GIP1 family. As to expression, expressed in roots, leaves, stems and flowers.

It is found in the nucleus. Its function is as follows. May act as a transcriptional coactivator of LOB domain-containing proteins. This is GBF-interacting protein 1-like from Arabidopsis thaliana (Mouse-ear cress).